A 375-amino-acid chain; its full sequence is Ubl carboxyl-terminal hydrolase 18 (375 aa).

The interval 18–45 is disordered; sequence ESPQSPADLEEKKEEDSNMKREQPRERP. Residues 26–45 are compositionally biased toward basic and acidic residues; that stretch reads LEEKKEEDSNMKREQPRERP. Residues 55-373 form the USP domain; that stretch reads VGLHNIGQTC…TAYLLVYMKM (319 aa). The Nucleophile role is filled by Cys64. His321 acts as the Proton acceptor in catalysis.

This sequence belongs to the peptidase C19 family. As to quaternary structure, interacts with STAT2; the interaction is direct. Interacts with IFNAR2; indirectly via STAT2, it negatively regulates the assembly of the ternary interferon-IFNAR1-IFNAR2 complex and inhibits type I interferon signaling. Interacts with STING1. Interacts with USP20.

It carries out the reaction Thiol-dependent hydrolysis of ester, thioester, amide, peptide and isopeptide bonds formed by the C-terminal Gly of ubiquitin (a 76-residue protein attached to proteins as an intracellular targeting signal).. In terms of biological role, interferon-induced ISG15-specific protease that plays a crucial role for maintaining a proper balance of ISG15-conjugated proteins in cells. Regulates protein ISGylation by efficiently cleaving ISG15 conjugates linked via isopeptide bonds. Regulates T-cell activation and T-helper 17 (Th17) cell differentiation by deubiquitinating TAK1, likely to keep TAK1-TAB complexes in steady conditions. In turn, restricts activation of NF-kappa-B, NFAT, and JNK as well as expression of IL2 in T-cells after TCR activation. Acts as a molecular adapter with USP20 to promote innate antiviral response through deubiquitinating STING1. Involved also in the negative regulation of the inflammatory response triggered by type I interferon. Upon recruitment by STAT2 to the type I interferon receptor subunit IFNAR2 interferes with the assembly of the ternary interferon-IFNAR1-IFNAR2 complex and acts as a negative regulator of the type I interferon signaling pathway. The polypeptide is Ubl carboxyl-terminal hydrolase 18 (USP18) (Pongo abelii (Sumatran orangutan)).